The chain runs to 445 residues: Membrane protein insertase YidC (445 aa).

Helical transmembrane passes span 6 to 26 (VVAI…PIKV), 248 to 268 (FGWA…PLYH), 313 to 333 (ASGC…WSVI), 352 to 372 (LSAG…VASY), and 388 to 408 (GIIM…GLFL).

It belongs to the OXA1/ALB3/YidC family. Type 1 subfamily. Interacts with the Sec translocase complex via SecD. Specifically interacts with transmembrane segments of nascent integral membrane proteins during membrane integration.

It localises to the cell inner membrane. Required for the insertion and/or proper folding and/or complex formation of integral membrane proteins into the membrane. Involved in integration of membrane proteins that insert both dependently and independently of the Sec translocase complex, as well as at least some lipoproteins. Aids folding of multispanning membrane proteins. This Thermotoga maritima (strain ATCC 43589 / DSM 3109 / JCM 10099 / NBRC 100826 / MSB8) protein is Membrane protein insertase YidC.